The sequence spans 145 residues: Plastocyanin, chloroplastic (145 aa).

A chloroplast-targeting transit peptide spans 1 to 47 (MKATLRAPASRASAVRPVASLKAAAQRVASVAGVSVASLALTLAAHA). The Plastocyanin-like domain maps to 48 to 145 (DATVKLGADS…AGMVGKIIVQ (98 aa)). 4 residues coordinate Cu cation: histidine 85, cysteine 130, histidine 133, and methionine 138.

This sequence belongs to the plastocyanin family. It depends on Cu(2+) as a cofactor.

Its subcellular location is the plastid. The protein resides in the chloroplast thylakoid membrane. In terms of biological role, participates in electron transfer between P700 and the cytochrome b6-f complex in photosystem I. This Chlamydomonas reinhardtii (Chlamydomonas smithii) protein is Plastocyanin, chloroplastic (PETE).